Consider the following 457-residue polypeptide: Peptidyl-prolyl cis-trans isomerase FKBP5 (457 aa).

Methionine 1 bears the N-acetylmethionine mark. Residues 1–26 (MTTDEGAKNNGESPTATVAEQGEDIT) are disordered. A Phosphoserine modification is found at serine 13. PPIase FKBP-type domains follow at residues 50 to 138 (GDKV…LDFK) and 165 to 251 (GATV…KSFE). TPR repeat units follow at residues 268–301 (AAIV…LEME), 317–350 (LAAF…DSAN), and 351–384 (GKGL…NPQN). The tract at residues 420–457 (DAKEEANKAMGKKTSEGVTNEKGTDSQAMEEEKPEGHV) is disordered. Serine 445 bears the Phosphoserine mark.

In terms of assembly, part of a heteromultimeric cytoplasmic complex with HSP90AA1, HSPA1A/HSPA1B and steroid receptors. Upon ligand binding dissociates from the complex and FKBP4 takes its place. Interacts with functionally mature heterooligomeric progesterone receptor complexes along with HSP90 and TEBP. Interacts with IFI44L; this interaction modulates the kinase activity of IKBKB and IKBKE. Interacts with IKBKB and IKBKE.

The protein localises to the cytoplasm. The protein resides in the nucleus. It carries out the reaction [protein]-peptidylproline (omega=180) = [protein]-peptidylproline (omega=0). With respect to regulation, inhibited by FK506 but not cyclosporin. Immunophilin protein with PPIase and co-chaperone activities. Component of unligated steroid receptors heterocomplexes through interaction with heat-shock protein 90 (HSP90). Plays a role in the intracellular trafficking of heterooligomeric forms of steroid hormone receptors maintaining the complex into the cytoplasm when unliganded. Acts as a regulator of Akt/AKT1 activity by promoting the interaction between Akt/AKT1 and PHLPP1, thereby enhancing dephosphorylation and subsequent activation of Akt/AKT1. Interacts with IKBKE and IKBKB which facilitates IKK complex assembly leading to increased IKBKE and IKBKB kinase activity, NF-kappaB activation, and IFN production. The protein is Peptidyl-prolyl cis-trans isomerase FKBP5 (FKBP5) of Pongo abelii (Sumatran orangutan).